A 206-amino-acid chain; its full sequence is Guanylate kinase (206 aa).

In terms of domain architecture, Guanylate kinase-like spans 7–185 (GLLIVISGPS…AVEKIRAIII (179 aa)). An ATP-binding site is contributed by 14–21 (GPSGAGKG).

Belongs to the guanylate kinase family.

The protein localises to the cytoplasm. It catalyses the reaction GMP + ATP = GDP + ADP. Functionally, essential for recycling GMP and indirectly, cGMP. This is Guanylate kinase from Caldanaerobacter subterraneus subsp. tengcongensis (strain DSM 15242 / JCM 11007 / NBRC 100824 / MB4) (Thermoanaerobacter tengcongensis).